The primary structure comprises 105 residues: MGTNQILDEIREVNLSYLLLAQQMLREDRIAAMYRLGIDEDIADILVKLTNSQLLKMAGSNMLLCRFRFDDSLIAEILTSHKQDRALTQSHAAILMAGLPAEKIS.

It belongs to the FlhD family. In terms of assembly, homodimer; disulfide-linked. Forms a heterohexamer composed of two FlhC and four FlhD subunits. Each FlhC binds a FlhD dimer, forming a heterotrimer, and a hexamer assembles by dimerization of two heterotrimers.

The protein resides in the cytoplasm. Functions in complex with FlhC as a master transcriptional regulator that regulates transcription of several flagellar and non-flagellar operons by binding to their promoter region. Activates expression of class 2 flagellar genes, including fliA, which is a flagellum-specific sigma factor that turns on the class 3 genes. Also regulates genes whose products function in a variety of physiological pathways. In Nitrosomonas europaea (strain ATCC 19718 / CIP 103999 / KCTC 2705 / NBRC 14298), this protein is Flagellar transcriptional regulator FlhD.